The sequence spans 332 residues: Ferredoxin--NADP reductase (332 aa).

FAD is bound by residues Asp33, Gln41, Tyr46, Ala86, Met121, Asp282, and Ser325.

The protein belongs to the ferredoxin--NADP reductase type 2 family. Homodimer. FAD is required as a cofactor.

It catalyses the reaction 2 reduced [2Fe-2S]-[ferredoxin] + NADP(+) + H(+) = 2 oxidized [2Fe-2S]-[ferredoxin] + NADPH. This chain is Ferredoxin--NADP reductase, found in Sulfurisphaera tokodaii (strain DSM 16993 / JCM 10545 / NBRC 100140 / 7) (Sulfolobus tokodaii).